We begin with the raw amino-acid sequence, 164 residues long: Transcriptional repressor NrdR (164 aa).

Residues 3–34 fold into a zinc finger; sequence CPKCNYHKSSVVDSRQAEDGNTIRRRRECEQC. The region spanning 49–139 is the ATP-cone domain; it reads LLVIKKDGTR…VYKSFKDVDE (91 aa).

It belongs to the NrdR family. Zn(2+) serves as cofactor.

Its function is as follows. Negatively regulates transcription of bacterial ribonucleotide reductase nrd genes and operons by binding to NrdR-boxes. This Streptococcus pyogenes serotype M5 (strain Manfredo) protein is Transcriptional repressor NrdR.